Here is a 128-residue protein sequence, read N- to C-terminus: Probable 4-amino-4-deoxy-L-arabinose-phosphoundecaprenol flippase subunit ArnF (128 aa).

The Cytoplasmic portion of the chain corresponds to 1-2 (MC). A helical membrane pass occupies residues 3–23 (LIWGLFSVIIASVAQLSLGFA). Residues 24–35 (ASHLPPMTHLWD) are Periplasmic-facing. The helical transmembrane segment at 36 to 56 (FIAALLAFGLDARILLLGLLG) threads the bilayer. The Cytoplasmic segment spans residues 57 to 76 (YLLSVFCWYKTLHKLALSKA). A helical transmembrane segment spans residues 77 to 97 (YALLSMSYVLVWIASMVLPGW). The Periplasmic portion of the chain corresponds to 98 to 100 (EGT). The chain crosses the membrane as a helical span at residues 101 to 121 (FSLKALLGVACIMSGLMLIFL). Topologically, residues 122-128 (PTTKQRY) are cytoplasmic.

The protein belongs to the ArnF family. As to quaternary structure, heterodimer of ArnE and ArnF.

It is found in the cell inner membrane. It participates in bacterial outer membrane biogenesis; lipopolysaccharide biosynthesis. Functionally, translocates 4-amino-4-deoxy-L-arabinose-phosphoundecaprenol (alpha-L-Ara4N-phosphoundecaprenol) from the cytoplasmic to the periplasmic side of the inner membrane. The sequence is that of Probable 4-amino-4-deoxy-L-arabinose-phosphoundecaprenol flippase subunit ArnF from Shigella flexneri.